Here is a 509-residue protein sequence, read N- to C-terminus: Cardiolipin synthase 1 (509 aa).

3 helical membrane passes run 4 to 24 (PIIQLLLIFTIVSIVPFLLNT), 30 to 50 (YTFVGVLWSITIVGISFVIFI), and 59 to 79 (LAWFLVLALLPVVGVLLYSIF). 2 consecutive PLD phosphodiesterase domains span residues 238–265 (VNYRNHRKIVIVDGEIGFTGGLNVGDEY) and 422–449 (KDGFMHAKILLVDDKIATIGTANMDVRS). Residues H243, K245, D250, H427, K429, and D434 contribute to the active site.

Belongs to the phospholipase D family. Cardiolipin synthase subfamily.

Its subcellular location is the cell membrane. The enzyme catalyses 2 a 1,2-diacyl-sn-glycero-3-phospho-(1'-sn-glycerol) = a cardiolipin + glycerol. Its function is as follows. Catalyzes the reversible phosphatidyl group transfer from one phosphatidylglycerol molecule to another to form cardiolipin (CL) (diphosphatidylglycerol) and glycerol. This chain is Cardiolipin synthase 1 (cls1), found in Bacillus anthracis.